The chain runs to 331 residues: Ribosomal RNA small subunit methyltransferase C (331 aa).

It belongs to the methyltransferase superfamily. RsmC family. As to quaternary structure, monomer.

Its subcellular location is the cytoplasm. It catalyses the reaction guanosine(1207) in 16S rRNA + S-adenosyl-L-methionine = N(2)-methylguanosine(1207) in 16S rRNA + S-adenosyl-L-homocysteine + H(+). Functionally, specifically methylates the guanine in position 1207 of 16S rRNA in the 30S particle. In Ectopseudomonas mendocina (strain ymp) (Pseudomonas mendocina), this protein is Ribosomal RNA small subunit methyltransferase C.